The following is a 57-amino-acid chain: Large ribosomal subunit protein eL20 (57 aa).

It belongs to the eukaryotic ribosomal protein eL20 family. As to quaternary structure, part of the 50S ribosomal subunit. Binds 23S rRNA.

This is Large ribosomal subunit protein eL20 from Natronomonas pharaonis (strain ATCC 35678 / DSM 2160 / CIP 103997 / JCM 8858 / NBRC 14720 / NCIMB 2260 / Gabara) (Halobacterium pharaonis).